Reading from the N-terminus, the 274-residue chain is Penicillin-insensitive murein endopeptidase (274 aa).

The first 19 residues, 1-19, serve as a signal peptide directing secretion; sequence MNKTAIALLALLASSASLA. 3 disulfides stabilise this stretch: cysteine 44/cysteine 265, cysteine 187/cysteine 235, and cysteine 216/cysteine 223. The Zn(2+) site is built by histidine 110, histidine 113, aspartate 120, aspartate 147, histidine 150, and histidine 211.

The protein belongs to the peptidase M74 family. As to quaternary structure, dimer. It depends on Zn(2+) as a cofactor.

It is found in the periplasm. Murein endopeptidase that cleaves the D-alanyl-meso-2,6-diamino-pimelyl amide bond that connects peptidoglycan strands. Likely plays a role in the removal of murein from the sacculus. This chain is Penicillin-insensitive murein endopeptidase, found in Shigella sonnei (strain Ss046).